The sequence spans 593 residues: Probable serine/threonine-protein kinase fhkA (593 aa).

Positions 1-24 (MSQTNYIPSTPNKSTPPSELSSTP) are disordered. Positions 54–111 (ITIGRSKTCNIVVPELIVSGKHCIITRADAIENGNTNYGLLMIQDQSTNGTFINGKLI) constitute an FHA domain. Residues 180–472 (YDFIKELGSG…VEQALNHPWI (293 aa)) enclose the Protein kinase domain. ATP is bound by residues 186–194 (LGSGNFSVV) and Lys-209. Asp-307 serves as the catalytic Proton acceptor.

It belongs to the protein kinase superfamily. CAMK Ser/Thr protein kinase family. CHK2 subfamily.

The catalysed reaction is L-seryl-[protein] + ATP = O-phospho-L-seryl-[protein] + ADP + H(+). The enzyme catalyses L-threonyl-[protein] + ATP = O-phospho-L-threonyl-[protein] + ADP + H(+). The polypeptide is Probable serine/threonine-protein kinase fhkA (fhkA) (Dictyostelium discoideum (Social amoeba)).